The chain runs to 221 residues: U1 small nuclear ribonucleoprotein C (221 aa).

The Matrin-type zinc finger occupies 4-36; it reads YFCDYCDTYLTHDSPSVRKTHCNGRKHKENVRV. The disordered stretch occupies residues 100 to 168; sequence SNPFPTSQAG…PPGAPTLPQP (69 aa). Residues 134–166 show a composition bias toward pro residues; sequence APAPPRMPGPLLMTPPPGAAAPGMAPPGAPTLP.

The protein belongs to the U1 small nuclear ribonucleoprotein C family. In terms of assembly, U1 snRNP is composed of the 7 core Sm proteins B/B', D1, D2, D3, E, F and G that assemble in a heptameric protein ring on the Sm site of the small nuclear RNA to form the core snRNP, and at least 3 U1 snRNP-specific proteins U1-70K, U1-A and U1-C. U1-C interacts with U1 snRNA and the 5' splice-site region of the pre-mRNA.

It is found in the nucleus. Component of the spliceosomal U1 snRNP, which is essential for recognition of the pre-mRNA 5' splice-site and the subsequent assembly of the spliceosome. U1-C is directly involved in initial 5' splice-site recognition for both constitutive and regulated alternative splicing. The interaction with the 5' splice-site seems to precede base-pairing between the pre-mRNA and the U1 snRNA. Stimulates commitment or early (E) complex formation by stabilizing the base pairing of the 5' end of the U1 snRNA and the 5' splice-site region. This chain is U1 small nuclear ribonucleoprotein C, found in Branchiostoma floridae (Florida lancelet).